The sequence spans 320 residues: Ferrochelatase (320 aa).

Residues H194 and E275 each contribute to the Fe cation site.

Belongs to the ferrochelatase family. As to quaternary structure, monomer.

The protein localises to the cytoplasm. The catalysed reaction is heme b + 2 H(+) = protoporphyrin IX + Fe(2+). It participates in porphyrin-containing compound metabolism; protoheme biosynthesis; protoheme from protoporphyrin-IX: step 1/1. Functionally, catalyzes the ferrous insertion into protoporphyrin IX. The protein is Ferrochelatase of Escherichia coli O81 (strain ED1a).